The following is a 345-amino-acid chain: S-adenosylmethionine:tRNA ribosyltransferase-isomerase (345 aa).

Belongs to the QueA family. In terms of assembly, monomer.

Its subcellular location is the cytoplasm. It carries out the reaction 7-aminomethyl-7-carbaguanosine(34) in tRNA + S-adenosyl-L-methionine = epoxyqueuosine(34) in tRNA + adenine + L-methionine + 2 H(+). It participates in tRNA modification; tRNA-queuosine biosynthesis. In terms of biological role, transfers and isomerizes the ribose moiety from AdoMet to the 7-aminomethyl group of 7-deazaguanine (preQ1-tRNA) to give epoxyqueuosine (oQ-tRNA). The polypeptide is S-adenosylmethionine:tRNA ribosyltransferase-isomerase (Aromatoleum aromaticum (strain DSM 19018 / LMG 30748 / EbN1) (Azoarcus sp. (strain EbN1))).